The chain runs to 419 residues: 20-hydroxy-prefusarin hydrolase FUS2 (419 aa).

S238 is a catalytic residue.

Belongs to the AB hydrolase superfamily. FUS2 hydrolase family.

It functions in the pathway mycotoxin biosynthesis. 20-hydroxy-prefusarin hydrolase; part of the gene cluster that mediates the biosynthesis of the mycotoxin fusarin C. Within the cluster, FUS1, FUS2, FUS8 and FUS9 are sufficient for fusarin production. The roles of the other FUS members are yet undetermined. The fusarin C synthetase FUS1 is responsible for the condensation of one acetyl-coenzyme A (CoA) unit with six malonyl-CoA units and the amide linkage of the arising heptaketide and homoserine, subsequently releasing the first intermediate, prefusarin, as an alcohol with an open ring structure. The cytochrome P450 monooxygenase FUS8 participates in multiple oxidation processes at carbon C-20 and is able to use the FUS1 product as substrate, resulting in formation of 20-hydroxy-prefusarin. This reaction seems to be essential before the 2-pyrrolidone ring closure can be catalyzed by FUS2, generating 20-hydroxy-fusarin. FUS8 is able to further oxidizes carbon C-20 after ring closure, resulting in the formation of carboxy-fusarin C. As the last step, FUS9 methylates the hydroxyl group at C-21 to generate fusarin C. Fusarin C can then rearrange to epi-fusarin C, the (z)-isomers, and fusarin A and fusarin D. This chain is 20-hydroxy-prefusarin hydrolase FUS2, found in Gibberella moniliformis (strain M3125 / FGSC 7600) (Maize ear and stalk rot fungus).